We begin with the raw amino-acid sequence, 156 residues long: Succinate dehydrogenase [ubiquinone] cytochrome b small subunit 1, mitochondrial (156 aa).

Residues 1 to 25 constitute a mitochondrion transit peptide; sequence MLSAVRRAIPLSARILRTSLIQRCA. Residues 26 to 59 lie on the Mitochondrial matrix side of the membrane; that stretch reads GATSAAVTGAAPPQFDPIAAEKGFKPLHSHGTLF. Residues 60–78 traverse the membrane as a helical segment; the sequence is KIERYFAAAMVPLIPAAYF. The Mitochondrial intermembrane portion of the chain corresponds to 79–83; that stretch reads IHGRE. A helical transmembrane segment spans residues 84-104; that stretch reads MDLCLALALTLHVHWGVWGVV. H95 is a heme b binding site. Residues 105-119 are Mitochondrial matrix-facing; the sequence is NDYGRPFVLGDTLAA. Y107 provides a ligand contact to a rhodoquinol. A helical membrane pass occupies residues 120–141; that stretch reads AVRVGAYIFTACLLAGLLYFNE. Residues 142–156 lie on the Mitochondrial intermembrane side of the membrane; the sequence is HDVGLTRAFEMVWEL.

It belongs to the CybS family. In terms of assembly, component of the mitochondrial electron transport chain complex II composed of four subunits: a flavoprotein (Fp), an iron-sulfur protein (Ip), and a large cytochrome b (CybL) subunit and a small cytochrome b (CybS) subunit. There are 2 developmental stage-specific forms of complex II which have the Ip and CybL subunits in common. Complex II from the free-living larvae (aerobic environment) acts as a succinate dehydrogenase and is composed of the common subunit Ip and CybL and the stage specific subunits FpL and CybSL. Complex II from parasitic larvae and adults (anaerobic environment) acts as a fumarate reductase and is composed of the common subunit Ip and CybL and the stage specific subunits FpA and CybSA. It depends on heme b as a cofactor. In terms of tissue distribution, expressed in adult muscles (at protein level).

It localises to the mitochondrion inner membrane. Membrane-bound small subunit (CybS) of the mitochondrial electron transport chain complex II, which together with the membrane-bound large subunit (CybL), anchor the catalytic subunits to the inner mitochondria membrane. During the parasitic larvae and adult stages, which occur in an anaerobic environment, complex II acts as a fumarate reductase by transferring electrons from rhodoquinol to fumarate. The chain is Succinate dehydrogenase [ubiquinone] cytochrome b small subunit 1, mitochondrial from Ascaris suum (Pig roundworm).